We begin with the raw amino-acid sequence, 484 residues long: tRNA sulfurtransferase (484 aa).

Positions 63-167 (QAFGERLACI…GDKLYMVTKR (105 aa)) constitute a THUMP domain. ATP is bound by residues 185 to 186 (LI), Lys-267, Gly-289, and Gln-298. Cysteines 346 and 458 form a disulfide. Residues 406–484 (IDTNEVVIDI…GYHNVKVYRP (79 aa)) form the Rhodanese domain. The active-site Cysteine persulfide intermediate is Cys-458.

The protein belongs to the ThiI family.

Its subcellular location is the cytoplasm. The enzyme catalyses [ThiI sulfur-carrier protein]-S-sulfanyl-L-cysteine + a uridine in tRNA + 2 reduced [2Fe-2S]-[ferredoxin] + ATP + H(+) = [ThiI sulfur-carrier protein]-L-cysteine + a 4-thiouridine in tRNA + 2 oxidized [2Fe-2S]-[ferredoxin] + AMP + diphosphate. It carries out the reaction [ThiS sulfur-carrier protein]-C-terminal Gly-Gly-AMP + S-sulfanyl-L-cysteinyl-[cysteine desulfurase] + AH2 = [ThiS sulfur-carrier protein]-C-terminal-Gly-aminoethanethioate + L-cysteinyl-[cysteine desulfurase] + A + AMP + 2 H(+). It participates in cofactor biosynthesis; thiamine diphosphate biosynthesis. Catalyzes the ATP-dependent transfer of a sulfur to tRNA to produce 4-thiouridine in position 8 of tRNAs, which functions as a near-UV photosensor. Also catalyzes the transfer of sulfur to the sulfur carrier protein ThiS, forming ThiS-thiocarboxylate. This is a step in the synthesis of thiazole, in the thiamine biosynthesis pathway. The sulfur is donated as persulfide by IscS. In Shewanella sp. (strain ANA-3), this protein is tRNA sulfurtransferase.